Reading from the N-terminus, the 506-residue chain is Voltage-gated potassium channel regulatory subunit KCNG4 (506 aa).

The Cytoplasmic portion of the chain corresponds to 1-216; it reads MPMSSRDRDL…EMVEDPQSGL (216 aa). Residues 217–238 traverse the membrane as a helical segment; that stretch reads PGKVFACLSVLFVATTAVSLCV. Residues 239-259 lie on the Extracellular side of the membrane; sequence STMPDFRAEEGKGECTRKCYY. The chain crosses the membrane as a helical span at residues 260 to 281; the sequence is IFVVESICVAWFSLEFCLRFVQ. Residues 282 to 292 are Cytoplasmic-facing; that stretch reads APNKCQFFRGP. Residues 293–312 traverse the membrane as a helical segment; that stretch reads LNVIDILAISPYYVSLAVSD. The Extracellular segment spans residues 313–326; sequence ESPEAGERPSSSSY. A helical; Voltage-sensor membrane pass occupies residues 327 to 351; that stretch reads LEKVGLVLRVLRALRILYVMRLARH. At 352–366 the chain is on the cytoplasmic side; it reads SLGLQTLGLTVRRCA. Residues 367–388 traverse the membrane as a helical segment; the sequence is REFGLLMLFLAVAVTLFSPLVY. The Extracellular segment spans residues 389 to 403; the sequence is VAENESGRVLEFTSI. The segment at residues 404–415 is an intramembrane region (helical); sequence PASYWWAIISMT. The Selectivity filter signature appears at 416-421; the sequence is TVGYGD. The stretch at 416–423 is an intramembrane region; that stretch reads TVGYGDMV. Residues 424 to 430 lie on the Extracellular side of the membrane; sequence PRSVPGQ. The helical transmembrane segment at 431–459 threads the bilayer; sequence MVALSSILSGILIMAFPATSIFHTFSHSY. Residues 460–506 lie on the Cytoplasmic side of the membrane; sequence LELKREQEQVQARLRRLQNTNSASERELLSDVDDLVPEGLTSPGRYM.

It belongs to the potassium channel family. G (TC 1.A.1.2) subfamily. Kv6.4/KCNG4 sub-subfamily. As to quaternary structure, heterotetramer with KCNB1. Does not form homomultimer.

It is found in the cell membrane. Functionally, regulatory subunit of the voltage-gated potassium (Kv) channel which, when coassembled with KCNB1, modulates the kinetics parameters of the heterotetrameric channel namely the time course of activation, deactivation and inactivation and on the voltage-dependence of activation. Potassium channel subunit that does not form functional channels by itself. Reduces the deactivation rate. Modulates the threshold for activation by shifting by approximately 20 mV in hyperpolarizing direction. Markedly changes the inactivation by shifting the voltage dependence of inactivation by approximately 40 mV in hyperpolarizing direction. Acceleratee activation and enhances the time course of activation. The polypeptide is Voltage-gated potassium channel regulatory subunit KCNG4 (Mus musculus (Mouse)).